Reading from the N-terminus, the 476-residue chain is Probable cytosol aminopeptidase (476 aa).

Mn(2+) contacts are provided by Lys-242 and Asp-247. The active site involves Lys-254. Positions 265, 324, and 326 each coordinate Mn(2+). The active site involves Arg-328.

The protein belongs to the peptidase M17 family. Mn(2+) is required as a cofactor.

The protein localises to the cytoplasm. The catalysed reaction is Release of an N-terminal amino acid, Xaa-|-Yaa-, in which Xaa is preferably Leu, but may be other amino acids including Pro although not Arg or Lys, and Yaa may be Pro. Amino acid amides and methyl esters are also readily hydrolyzed, but rates on arylamides are exceedingly low.. It catalyses the reaction Release of an N-terminal amino acid, preferentially leucine, but not glutamic or aspartic acids.. In terms of biological role, presumably involved in the processing and regular turnover of intracellular proteins. Catalyzes the removal of unsubstituted N-terminal amino acids from various peptides. The sequence is that of Probable cytosol aminopeptidase from Treponema denticola (strain ATCC 35405 / DSM 14222 / CIP 103919 / JCM 8153 / KCTC 15104).